The sequence spans 134 residues: Proline-rich protein 4 (134 aa).

The N-terminal stretch at 1-16 is a signal peptide; it reads MLLVLLSVVLLALSSA. Residues 28 to 134 are disordered; it reads FTFTIPDVED…ARHPQEQPLW (107 aa). The segment covering 47 to 59 has biased composition (pro residues); sequence QRPPPEGLLPRPP. Positions 110–119 are enriched in polar residues; it reads VSLQEASSFF. Residues 120 to 134 are compositionally biased toward basic and acidic residues; that stretch reads QRDRPARHPQEQPLW.

In terms of tissue distribution, abundantly expressed in lacrimal gland where it is found in the acinar cells but not in the intralobular ducts. Also found in the submandibular gland, the parotid and sublingual glands.

The protein resides in the secreted. The chain is Proline-rich protein 4 (PRR4) from Homo sapiens (Human).